The following is a 448-amino-acid chain: N-succinylarginine dihydrolase (448 aa).

Residues 19–28, N110, and 137–138 contribute to the substrate site; these read GGLSYGNVAS and HR. E174 is an active-site residue. R214 serves as a coordination point for substrate. H250 is an active-site residue. Positions 252 and 365 each coordinate substrate. The active-site Nucleophile is the C371.

This sequence belongs to the succinylarginine dihydrolase family. In terms of assembly, homodimer.

It catalyses the reaction N(2)-succinyl-L-arginine + 2 H2O + 2 H(+) = N(2)-succinyl-L-ornithine + 2 NH4(+) + CO2. Its pathway is amino-acid degradation; L-arginine degradation via AST pathway; L-glutamate and succinate from L-arginine: step 2/5. Its function is as follows. Catalyzes the hydrolysis of N(2)-succinylarginine into N(2)-succinylornithine, ammonia and CO(2). The polypeptide is N-succinylarginine dihydrolase (Pseudomonas aeruginosa (strain LESB58)).